The sequence spans 236 residues: Small ribosomal subunit protein uS2c (236 aa).

This sequence belongs to the universal ribosomal protein uS2 family.

It localises to the plastid. This is Small ribosomal subunit protein uS2c (rps2) from Cuscuta obtusiflora (Peruvian dodder).